The sequence spans 177 residues: Adenine phosphoribosyltransferase (177 aa).

This sequence belongs to the purine/pyrimidine phosphoribosyltransferase family. In terms of assembly, homodimer.

The protein resides in the cytoplasm. It carries out the reaction AMP + diphosphate = 5-phospho-alpha-D-ribose 1-diphosphate + adenine. It participates in purine metabolism; AMP biosynthesis via salvage pathway; AMP from adenine: step 1/1. Its function is as follows. Catalyzes a salvage reaction resulting in the formation of AMP, that is energically less costly than de novo synthesis. The sequence is that of Adenine phosphoribosyltransferase from Anaeromyxobacter sp. (strain Fw109-5).